A 247-amino-acid polypeptide reads, in one-letter code: Thioredoxin reductase-like selenoprotein T homolog selt-1.1 (247 aa).

The N-terminal stretch at 1–26 is a signal peptide; the sequence is MSRFGVFIIGVLFFMSVCDVLRTVSA. C92 and C95 are disulfide-bonded.

Belongs to the SelWTH family. SELT subfamily. In terms of tissue distribution, broadly expressed in neurons of nervous system including ADL, ASH, ASI, ASJ, ASK and AWB amphid sensilla neurons, in epithelial cells including hypodermal, arcade, pharyngeal, vulval and rectal cells, and in somatic muscle cells of the head, neck and body wall, and non-striated pharyngeal muscles.

The protein localises to the endoplasmic reticulum. The enzyme catalyses [thioredoxin]-dithiol + NADP(+) = [thioredoxin]-disulfide + NADPH + H(+). Its function is as follows. Probably has thioredoxin reductase-like oxidoreductase activity. Plays a role in regulating the oxidative stress response, and odorant and pathogenic bacteria avoidance behavior. The protein is Thioredoxin reductase-like selenoprotein T homolog selt-1.1 of Caenorhabditis elegans.